The chain runs to 58 residues: Large ribosomal subunit protein uL30 (58 aa).

It belongs to the universal ribosomal protein uL30 family. As to quaternary structure, part of the 50S ribosomal subunit.

This chain is Large ribosomal subunit protein uL30, found in Zymomonas mobilis subsp. mobilis (strain ATCC 31821 / ZM4 / CP4).